Here is a 527-residue protein sequence, read N- to C-terminus: Thymidine kinase (527 aa).

The interval 1–57 (MTGRGQPPKKNDTYDYPRKQPPKNGSYDNYDYPTSTKTRSTNKQRKDSNYPPRETIF) is disordered. Over residues 9–18 (KKNDTYDYPR) the composition is skewed to basic and acidic residues. A compositionally biased stretch (polar residues) spans 32–41 (YPTSTKTRST). 216-223 (GSIGVGKT) provides a ligand contact to ATP. Glu243 acts as the Proton acceptor in catalysis. 2 residues coordinate substrate: Tyr260 and Gln281. Residue Arg368 coordinates ATP. A substrate-binding site is contributed by Arg374.

Belongs to the herpesviridae thymidine kinase family. In terms of assembly, homodimer.

It carries out the reaction thymidine + ATP = dTMP + ADP + H(+). Its function is as follows. Catalyzes the transfer of the gamma-phospho group of ATP to thymidine to generate dTMP in the salvage pathway of pyrimidine synthesis. The dTMP serves as a substrate for DNA polymerase during viral DNA replication. Allows the virus to be reactivated and to grow in non-proliferative cells lacking a high concentration of phosphorylated nucleic acid precursors. This Saimiriine herpesvirus 2 (strain 11) (SaHV-2) protein is Thymidine kinase.